The primary structure comprises 534 residues: Probable alanine aminotransferase, mitochondrial (534 aa).

A mitochondrion-targeting transit peptide spans 1–18 (MFKRSLKVLLSNPPINRV). Lys352 is subject to N6-(pyridoxal phosphate)lysine.

The protein belongs to the class-I pyridoxal-phosphate-dependent aminotransferase family. Alanine aminotransferase subfamily. As to quaternary structure, homodimer. Pyridoxal 5'-phosphate serves as cofactor.

Its subcellular location is the mitochondrion matrix. The catalysed reaction is L-alanine + 2-oxoglutarate = pyruvate + L-glutamate. Its pathway is amino-acid degradation; L-alanine degradation via transaminase pathway; pyruvate from L-alanine: step 1/1. The chain is Probable alanine aminotransferase, mitochondrial (gpt) from Dictyostelium discoideum (Social amoeba).